We begin with the raw amino-acid sequence, 98 residues long: Defensin (98 aa).

The N-terminal stretch at 1–19 (MRTFLVTFVLVVVVGVISA) is a signal peptide. A propeptide spanning residues 20 to 58 (YPSNPVEVEAEDFDAQDPDLQTFQDTFYEVPQVHSRQKR) is cleaved from the precursor. Intrachain disulfides connect Cys-61–Cys-88, Cys-74–Cys-94, and Cys-78–Cys-96.

As to expression, is synthesized by the fat body and eventually secreted into the hemolymph.

It is found in the secreted. Has antiparasitic activity against promastigote forms of L.major, and antibacterial activity against Gram-positive bacterium S.aureus. Has antifungal activity against the yeasts C.albicans and S.cerevisiae, but not C.glabrata. Has antifungal activity against filamentous fungi A.fumigatus, F.culmorum, F.oxysporum, N.crassa, T.viride and T.mentagrophytes, but not B.bassiana. This is Defensin from Phlebotomus duboscqi (Sandfly).